The chain runs to 592 residues: A-type ATP synthase subunit A (592 aa).

Glycine 234–threonine 241 lines the ATP pocket.

Belongs to the ATPase alpha/beta chains family. In terms of assembly, has multiple subunits with at least A(3), B(3), C, D, E, F, H, I and proteolipid K(x).

Its subcellular location is the cell membrane. It catalyses the reaction ATP + H2O + 4 H(+)(in) = ADP + phosphate + 5 H(+)(out). Its function is as follows. Component of the A-type ATP synthase that produces ATP from ADP in the presence of a proton gradient across the membrane. The A chain is the catalytic subunit. This Nitrosopumilus maritimus (strain SCM1) protein is A-type ATP synthase subunit A.